The sequence spans 198 residues: E3 ubiquitin-protein ligase rnf152 (198 aa).

The RING-type zinc finger occupies 12 to 55; that stretch reads CQICFNYFSQRRLPKLLHCQHTCCSVCLSQMRLSQREIRCPWCR. Residues 162-182 traverse the membrane as a helical segment; it reads TGVCTVLLVAFILIFLLGIVL.

It belongs to the RNF152 family.

It localises to the lysosome membrane. The enzyme catalyses S-ubiquitinyl-[E2 ubiquitin-conjugating enzyme]-L-cysteine + [acceptor protein]-L-lysine = [E2 ubiquitin-conjugating enzyme]-L-cysteine + N(6)-ubiquitinyl-[acceptor protein]-L-lysine.. The protein operates within protein modification; protein ubiquitination. E3 ubiquitin-protein ligase that acts as a negative regulator of mTORC1 signaling by mediating ubiquitination of RagA/RRAGA and RHEB. Catalyzes 'Lys-63'-linked polyubiquitination of RagA/RRAGA in response to amino acid starvation, thereby regulating mTORC1 signaling. Also mediates monoubiquitination of RHEB, promoting its association with the TSC-TBC complex and subsequent inhibition. Also mediates 'Lys-48'-linked polyubiquitination of target proteins and their subsequent targeting to the proteasome for degradation. This Danio rerio (Zebrafish) protein is E3 ubiquitin-protein ligase rnf152.